A 142-amino-acid chain; its full sequence is MPTIEEIRAQEVWNNCAVRAVTSGVMGGGLGLMMGLFLGALDNPITHDTMTARQQFVFTAKQMGQRSWNSCKTFAVMGLVFSAAECIVEKARAKHDTVNTAIAGCVTGGSMSARGGPKAACIGCAGFAIFSVLIEKFFDRHT.

4 consecutive transmembrane segments (helical) span residues 21–41, 70–88, 97–113, and 120–137; these read VTSG…LGAL, SCKT…ECIV, TVNT…SMSA, and ACIG…IEKF.

Belongs to the Tim17/Tim22/Tim23 family.

The protein localises to the mitochondrion inner membrane. Its function is as follows. Essential core component of the TIM22 complex, a complex that mediates the import and insertion of multi-pass transmembrane proteins into the mitochondrial inner membrane. In Arabidopsis thaliana (Mouse-ear cress), this protein is Mitochondrial import inner membrane translocase subunit TIM22-4 (TIM22-4).